Here is a 265-residue protein sequence, read N- to C-terminus: Methyl-coenzyme M reductase II subunit gamma (265 aa).

A coenzyme M-binding site is contributed by Arg-123.

The protein belongs to the methyl-coenzyme M reductase gamma subunit family. As to quaternary structure, MCR is a hexamer of two alpha, two beta, and two gamma chains, forming a dimer of heterotrimers. It depends on coenzyme F430 as a cofactor.

The catalysed reaction is coenzyme B + methyl-coenzyme M = methane + coenzyme M-coenzyme B heterodisulfide. It functions in the pathway one-carbon metabolism; methyl-coenzyme M reduction; methane from methyl-coenzyme M: step 1/1. Functionally, component of the methyl-coenzyme M reductase (MCR) I that catalyzes the reductive cleavage of methyl-coenzyme M (CoM-S-CH3 or 2-(methylthio)ethanesulfonate) using coenzyme B (CoB or 7-mercaptoheptanoylthreonine phosphate) as reductant which results in the production of methane and the mixed heterodisulfide of CoB and CoM (CoM-S-S-CoB). This is the final step in methanogenesis. The polypeptide is Methyl-coenzyme M reductase II subunit gamma (mrtG) (Methanothermobacter thermautotrophicus (strain ATCC 29096 / DSM 1053 / JCM 10044 / NBRC 100330 / Delta H) (Methanobacterium thermoautotrophicum)).